Consider the following 601-residue polypeptide: MAKHIVELTDALSNKIAAGEVVERPASVVKELVENAIDAGSTVIDILVEEAGLNKITIIDNGSGIEEEDVATAFLRHATSKIKNEADLFRVHTLGFRGEALPSIASVSHLAMETSTGETKGTSISLEGGKIIEQKSGHARKGTQIEVSQLFFNTPARLKYLKSLPTELGNITDILNRLALAHPDISFRFSHNGKPLLQTNGNGDLRQVIAAIYGISIAKKSIPVKAESLDFKISGYAVLPEVNRSNRNYISTIINGRFIKNFALVKAIQEGYHTLLPIGRFPIIVLQIEMDPIIVDVNVHPAKLEVRLSKEKELGQLISQMIKEAFHKLQLIPEGEISKKQKEVQKSEQIQMSFEENKPAKEIPTLFSKPTIPEYVPSDEDAPREDDFILETMPPYEPQAEQEEHSKERIPKMYPIGQMHATYIFAQNENGLYIIDQHAAQERIKYEFYREKIGEVSRELQELLVPIVLEFPADEYVRLEEQKAKLEEVGVFLENFGQNSFIIRAHPTWFPKDQEEEMLREIIDEALSAPSISIHKLREDTAIMMSCKKSIKANHYLTTQDMEALLDTLREASDPFTCPHGRPVIIQYSTYELEKMFKRVM.

It belongs to the DNA mismatch repair MutL/HexB family.

This protein is involved in the repair of mismatches in DNA. It is required for dam-dependent methyl-directed DNA mismatch repair. May act as a 'molecular matchmaker', a protein that promotes the formation of a stable complex between two or more DNA-binding proteins in an ATP-dependent manner without itself being part of a final effector complex. This chain is DNA mismatch repair protein MutL, found in Listeria monocytogenes serovar 1/2a (strain ATCC BAA-679 / EGD-e).